The chain runs to 388 residues: 3-ketoacyl-CoA thiolase (388 aa).

Residue Cys91 is the Acyl-thioester intermediate of the active site. Residues His343 and Cys373 each act as proton acceptor in the active site.

The protein belongs to the thiolase-like superfamily. Thiolase family. Heterotetramer of two alpha chains (FadB) and two beta chains (FadA).

It is found in the cytoplasm. The catalysed reaction is an acyl-CoA + acetyl-CoA = a 3-oxoacyl-CoA + CoA. It participates in lipid metabolism; fatty acid beta-oxidation. Catalyzes the final step of fatty acid oxidation in which acetyl-CoA is released and the CoA ester of a fatty acid two carbons shorter is formed. The sequence is that of 3-ketoacyl-CoA thiolase from Photorhabdus laumondii subsp. laumondii (strain DSM 15139 / CIP 105565 / TT01) (Photorhabdus luminescens subsp. laumondii).